The chain runs to 236 residues: Dense granule protein 7 (236 aa).

The signal sequence occupies residues 1 to 26 (MARHAIFSALCVLGLVAAALPQFATA). The interval 45–106 (DGQAPVDSLR…EVHFRKRGVR (62 aa)) is disordered. Residues 70–80 (TTSMDKASVES) show a composition bias toward polar residues. A required for dimerization, interactions with liposomes and liposome tubulation region spans residues 147 to 236 (AVGMGASYFA…SGEDGEDARQ (90 aa)). A helical membrane pass occupies residues 181–201 (VGTVLGFAALAAAAAFLGMGL). The tract at residues 208–236 (FSPRKNRSRQPALEQEVPESGEDGEDARQ) is disordered. An N-linked (GlcNAc...) asparagine glycan is attached at asparagine 213. Acidic residues predominate over residues 223-236 (EVPESGEDGEDARQ).

The protein belongs to the Gra7 family. As to quaternary structure, homodimer. Can form higher order homooligomers in a lipid-stimulated manner. Component of a complex at least composed of ROP18, GRA7 and ROP2. Interacts with ROP5. Interacts with ROP18 in the absence of ROP5. Interacts with mouse IRGA6/IIGP1 in GTP-dependent manner; the interaction results in faster turnover of the GTP-activated IRGA6/IIGP1 oligomer. Interacts with mouse TRAF6 (via N-terminal RING domain); the interaction plays a role in GRA7-induced pro-inflammatory cytokine production in mouse macrophages.

The protein localises to the secreted. The protein resides in the parasitophorous vacuole lumen. It localises to the parasitophorous vacuole membrane. Its subcellular location is the cytoplasm. It is found in the host cytoplasm. The protein localises to the cytoplasmic vesicle. The protein resides in the secretory vesicle. In terms of biological role, binds lipid bilayers, sequesters host endocytic organelles in the parasitophorous vacuole space, and causes their deformation and remodeling. Plays a role in nutrient acquisition from the host. In complex with ROP18, targets immunity-related GTPases (IRGs) to prevent IRG-mediated parasite killing by mouse cells. Important component within a kinase complex, contributing to phosphorylation of mouse IRGA6/IIGP1, an immunity-related GTPase that protects mice from infection by certain intracellular pathogens, by Toxoplasma gondii ROP5 and ROP18. Induces pro-inflammatory cytokine production in host macrophages. Activates host pro-inflammatory signaling pathways in a MyD88-dependent manner. Triggers generation of reactive oxygen species (ROS) in host cells. Activates MAPK pathway in host cells. Activates host NF-kappa-B signaling pathway by interacting with TRAF6 and modulating the 'Lys-63'-linked polyubiquitination of TRAF6. The protein is Dense granule protein 7 of Toxoplasma gondii.